The primary structure comprises 301 residues: Aquaporin NIP2-3 (301 aa).

2 helical membrane passes run 57–77 and 91–111; these read VISEVVATFLLVFVTCGAASI and SVAGGLIVTVMIYATGHISGA. An NPA 1 motif is present at residues 114–116; the sequence is NPA. The next 3 membrane-spanning stretches (helical) occupy residues 132 to 154, 172 to 192, and 200 to 220; these read VPFYWAAQFTGAMCAAFVLKAVL, ALAIEIVVTFNMMFVTCAVAT, and LAGLAVGSAVCITSIFAGPVS. The NPA 2 motif lies at 225 to 227; it reads NPA. A helical transmembrane segment spans residues 238 to 258; that stretch reads VFTGLWIYFLGPVVGTLSGAW.

This sequence belongs to the MIP/aquaporin (TC 1.A.8) family. NIP (TC 1.A.8.12) subfamily.

The protein localises to the membrane. Its function is as follows. Aquaporins facilitate the transport of water and small neutral solutes across cell membranes. The polypeptide is Aquaporin NIP2-3 (NIP2-3) (Zea mays (Maize)).